A 262-amino-acid chain; its full sequence is Carbonic anhydrase 1 (262 aa).

At Ala2 the chain carries N-acetylalanine. Residues 4–261 form the Alpha-carbonic anhydrase domain; the sequence is LNWSYEGENG…LKGRQVKASF (258 aa). The active-site Proton donor/acceptor is the His65. Residues His95, His97, and His120 each contribute to the Zn(2+) site. Substrate contacts are provided by residues Thr200 and 200–201; that span reads TH.

The protein belongs to the alpha-carbonic anhydrase family. Requires Zn(2+) as cofactor.

It is found in the cytoplasm. The enzyme catalyses hydrogencarbonate + H(+) = CO2 + H2O. It catalyses the reaction urea = cyanamide + H2O. Inhibited by acetazolamide. Its function is as follows. Catalyzes the reversible hydration of carbon dioxide. Can hydrate cyanamide to urea. This Monodelphis domestica (Gray short-tailed opossum) protein is Carbonic anhydrase 1 (CA1).